Here is a 268-residue protein sequence, read N- to C-terminus: Tryptophan synthase alpha chain (268 aa).

Residues Glu-49 and Asp-60 each act as proton acceptor in the active site.

This sequence belongs to the TrpA family. In terms of assembly, tetramer of two alpha and two beta chains.

The catalysed reaction is (1S,2R)-1-C-(indol-3-yl)glycerol 3-phosphate + L-serine = D-glyceraldehyde 3-phosphate + L-tryptophan + H2O. It participates in amino-acid biosynthesis; L-tryptophan biosynthesis; L-tryptophan from chorismate: step 5/5. The alpha subunit is responsible for the aldol cleavage of indoleglycerol phosphate to indole and glyceraldehyde 3-phosphate. This chain is Tryptophan synthase alpha chain, found in Salmonella typhimurium (strain LT2 / SGSC1412 / ATCC 700720).